The sequence spans 525 residues: EGF domain-specific O-linked N-acetylglucosamine transferase (525 aa).

The N-terminal stretch at 1–24 (MVPLRLVLLLHIIHFSCENEVGSA) is a signal peptide. The Required for optimal activity signature appears at 293–295 (DYE). Asn-352 carries an N-linked (GlcNAc...) asparagine glycan. The short motif at 522 to 525 (RDEL) is the Prevents secretion from ER element.

Belongs to the glycosyltransferase 61 family.

The protein resides in the endoplasmic reticulum lumen. It carries out the reaction L-seryl-[protein] + UDP-N-acetyl-alpha-D-glucosamine = 3-O-(N-acetyl-beta-D-glucosaminyl)-L-seryl-[protein] + UDP + H(+). It catalyses the reaction L-threonyl-[protein] + UDP-N-acetyl-alpha-D-glucosamine = 3-O-(N-acetyl-beta-D-glucosaminyl)-L-threonyl-[protein] + UDP + H(+). Catalyzes the transfer of a single N-acetylglucosamine from UDP-GlcNAc to a serine or threonine residue in extracellular proteins resulting in their modification with a beta-linked N-acetylglucosamine (O-GlcNAc). Specifically glycosylates the Thr residue located between the fifth and sixth conserved cysteines of folded EGF-like domains. The sequence is that of EGF domain-specific O-linked N-acetylglucosamine transferase (eogt) from Xenopus laevis (African clawed frog).